A 989-amino-acid chain; its full sequence is Cation-chloride cotransporter 1 (989 aa).

The span at 1–10 (MENGEIEGAA) shows a compositional bias: acidic residues. The tract at residues 1–29 (MENGEIEGAADDGVPVPAPPNGRRYRPVG) is disordered. Residues 1-132 (MENGEIEGAA…GRPKETGPKF (132 aa)) are Cytoplasmic-facing. A helical transmembrane segment spans residues 133–153 (GTMMGVFVPCLQNILGIIYYI). Topologically, residues 154-167 (RFTWIVGMAGVWQS) are extracellular. The helical transmembrane segment at 168-188 (LVLVSFCGACTFLTGISLSAI) threads the bilayer. Over 189–214 (ATNGAMKGGGPYYLIGRALGPEVGVS) the chain is Cytoplasmic. A helical membrane pass occupies residues 215–235 (IGLCFFLGNAVAGSMYVLGAV). The Extracellular portion of the chain corresponds to 236–280 (ETFLDAVPSAGFFKESVTVVNNTLVNGTATASTATISTPSLHDLQ). Residues N256 and N261 are each glycosylated (N-linked (GlcNAc...) asparagine). A helical transmembrane segment spans residues 281-301 (VYGVIVTILLCFIVFGGVKII). Residues 302-304 (NKV) lie on the Cytoplasmic side of the membrane. The helical transmembrane segment at 305-325 (APAFLIPVLFSLLCIYLGVFI) threads the bilayer. Residues 326–365 (APRHNAPKGITGLSITTFKDNWGSEYQRTNNAGVPDPNGS) lie on the Extracellular side of the membrane. N363 carries N-linked (GlcNAc...) asparagine glycosylation. The chain crosses the membrane as a helical span at residues 366–386 (IYWDFNALVGLFFPAVTGIMA). Residues 387 to 405 (GSNRSASLKDTQRSIPIGT) lie on the Cytoplasmic side of the membrane. The helical transmembrane segment at 406 to 426 (LSATLTTTAMYLFSVLLFGAL) threads the bilayer. At 427-441 (ATREELLTDRLLTAT) the chain is on the extracellular side. A helical transmembrane segment spans residues 442-462 (VAWPAPAVIYIGIILSTLGAA). Topologically, residues 463–498 (LQSLTGAPRLLAAIANDDILPVLNYFKVSEGAEPHS) are cytoplasmic. A helical transmembrane segment spans residues 499-519 (ATLFTAFICICCVVIGNLDLI). Topologically, residues 520–522 (TPT) are extracellular. The helical transmembrane segment at 523–543 (ITMFFLLCYAGVNLSCFLLDL) threads the bilayer. The Cytoplasmic portion of the chain corresponds to 544-551 (LDAPSWRP). A helical transmembrane segment spans residues 552–572 (RWKFHHWSLSLVGALLCVVIM). Topologically, residues 573–578 (FLISWS) are extracellular. A helical transmembrane segment spans residues 579–599 (FTVVSLALASLIYYYVSLKGK). The Cytoplasmic portion of the chain corresponds to 600–989 (AGDWGDGFKS…YRRDVVTFFT (390 aa)).

It belongs to the SLC12A transporter family. Expressed in roots, stems and leaves with higher expression in root and leaf tips.

The protein resides in the membrane. Functionally, probable cation/chloride cotransporter that may mediate potassium-chloride cotransport. Involved in plant development and K(+) and Cl(-) homeostasis. May not be involved in sodium-chloride cotransport. This Oryza sativa subsp. japonica (Rice) protein is Cation-chloride cotransporter 1 (CCC1).